The primary structure comprises 229 residues: MRSAKVGVARQLETKKPQTGRKISTSSRGTIHSQQSQPEDIQMKYTRKELKEYRQLFNMFDTDGSGAIGNEELKQAMISIGLHANKAEIDNVIKEVDADGNGEIDFEEFCACMKKSQNIVKSTNEELIRECFEIFDQDRNGIITENEFKYIAKEFGDFDDELAEKVFRELDVSANGHLSADQFATIVEDYLLNDPKHDIDTGDSDVERYDDRHDDRASPMPNHLSTVPE.

Positions 1-41 (MRSAKVGVARQLETKKPQTGRKISTSSRGTIHSQQSQPEDI) are disordered. Polar residues predominate over residues 21–39 (RKISTSSRGTIHSQQSQPE). EF-hand domains lie at 48–83 (KELK…IGLH), 84–119 (ANKA…SQNI), 123–158 (TNEE…FGDF), and 159–193 (DDEL…YLLN). Positions 61, 63, 65, 72, 97, 99, 101, 103, 108, 136, 138, 140, and 147 each coordinate Ca(2+). Basic and acidic residues predominate over residues 194 to 217 (DPKHDIDTGDSDVERYDDRHDDRA). The interval 194–229 (DPKHDIDTGDSDVERYDDRHDDRASPMPNHLSTVPE) is disordered.

This is an uncharacterized protein from Caenorhabditis elegans.